Here is a 434-residue protein sequence, read N- to C-terminus: F-box/FBD/LRR-repeat protein At3g26920 (434 aa).

An F-box domain is found at 16-65 (EDRISQLPEALLLQILSLLPTKEVVAVSVLAKRWRFLWKMVPSLEFFYYF). LRR repeat units lie at residues 69 to 95 (LERFSYNVSKCLFSHQAPFLQSLHLNM), 100 to 125 (DPRIMDFEILIGIAFGRQLRKLVLKV), 145 to 172 (TLELYHCILIDVPFPVCLKSLRTLNLHE), 173 to 198 (VEFVNDESVVNLLAGCISLENLVIHQ), 219 to 244 (VIVEYYEEFSVFVVNTPSLKYLKIEG), 265 to 290 (IIDVSFKVFESILGSLASVQRLSLKV), and 315 to 341 (TYKPKWWNLLTLMLDTSPNLQVLKIFD). An FBD domain is found at 353–403 (KWNEPKNVPECLLLHLETFVWTCYEGKLENEIELAKYILRNARRLKKATFS).

The protein is F-box/FBD/LRR-repeat protein At3g26920 of Arabidopsis thaliana (Mouse-ear cress).